A 264-amino-acid polypeptide reads, in one-letter code: Proteasome assembly chaperone 2 (264 aa).

Thr-137 bears the Phosphothreonine mark.

This sequence belongs to the PSMG2 family. Forms a heterodimer with PSMG1. The PSMG1-PSMG2 heterodimer interacts directly with the PSMA5 and PSMA7 proteasome alpha subunits. Degraded by the proteasome upon completion of 20S proteasome maturation. As to expression, widely expressed with highest levels in lung, brain and colon. Moderately expressed in muscle, stomach, spleen and heart. Weakly expressed in small intestine, pancreas and liver. Highly expressed in hepatocellular carcinomas with low levels in surrounding liver tissue.

It localises to the nucleus. Its function is as follows. Chaperone protein which promotes assembly of the 20S proteasome as part of a heterodimer with PSMG1. The PSMG1-PSMG2 heterodimer binds to the PSMA5 and PSMA7 proteasome subunits, promotes assembly of the proteasome alpha subunits into the heteroheptameric alpha ring and prevents alpha ring dimerization. This chain is Proteasome assembly chaperone 2, found in Homo sapiens (Human).